The following is a 92-amino-acid chain: Exodeoxyribonuclease 7 small subunit (92 aa).

Over residues 71–84 the composition is skewed to low complexity; the sequence is AESAGTAKSAVAAD. The interval 71-92 is disordered; sequence AESAGTAKSAVAADSRGAADSA.

The protein belongs to the XseB family. In terms of assembly, heterooligomer composed of large and small subunits.

Its subcellular location is the cytoplasm. It catalyses the reaction Exonucleolytic cleavage in either 5'- to 3'- or 3'- to 5'-direction to yield nucleoside 5'-phosphates.. Bidirectionally degrades single-stranded DNA into large acid-insoluble oligonucleotides, which are then degraded further into small acid-soluble oligonucleotides. The sequence is that of Exodeoxyribonuclease 7 small subunit from Leifsonia xyli subsp. xyli (strain CTCB07).